The sequence spans 159 residues: Phosphopantetheine adenylyltransferase (159 aa).

This sequence belongs to the eukaryotic CoaD family.

It localises to the cytoplasm. It carries out the reaction (R)-4'-phosphopantetheine + ATP + H(+) = 3'-dephospho-CoA + diphosphate. It functions in the pathway cofactor biosynthesis; coenzyme A biosynthesis. In terms of biological role, reversibly transfers an adenylyl group from ATP to 4'-phosphopantetheine, yielding dephospho-CoA (dPCoA) and pyrophosphate. The sequence is that of Phosphopantetheine adenylyltransferase from Thermococcus gammatolerans (strain DSM 15229 / JCM 11827 / EJ3).